The sequence spans 94 residues: Small ribosomal subunit protein uS19 (94 aa).

Belongs to the universal ribosomal protein uS19 family.

Protein S19 forms a complex with S13 that binds strongly to the 16S ribosomal RNA. This Dictyoglomus thermophilum (strain ATCC 35947 / DSM 3960 / H-6-12) protein is Small ribosomal subunit protein uS19.